The primary structure comprises 407 residues: uncharacterized protein (407 aa).

This is an uncharacterized protein from Mycobacterium tuberculosis (strain CDC 1551 / Oshkosh).